The sequence spans 797 residues: Peroxisome proliferator-activated receptor gamma coactivator 1-alpha (797 aa).

The residue at position 77 (K77) is an N6-acetyllysine. The disordered stretch occupies residues 101–138; it reads EDGLPSFDALTDGAVTTDNEASPSSMPDGTPPPQEAEE. Positions 114-127 are enriched in polar residues; sequence AVTTDNEASPSSMP. Residues 142–146 carry the LXXLL motif motif; sequence LKKLL. K144 is modified (N6-acetyllysine). A Phosphothreonine; by AMPK modification is found at T177. At K183 the chain carries N6-acetyllysine. The interval 212-276 is disordered; the sequence is YLTTNDDPPH…NDPKGSPFEN (65 aa). Residues 218–236 are compositionally biased toward basic and acidic residues; the sequence is DPPHTKPTENRNSSRDKCA. Residues 243–259 are compositionally biased toward polar residues; sequence TQPQSQHAQAKPTTLSL. N6-acetyllysine occurs at positions 253, 270, 277, 320, 346, 412, 441, and 450. Residues 289–376 form a disordered region; that stretch reads GTAGLTPPTT…HEERKTKRPS (88 aa). The segment at 292-338 is interaction with PPARG; it reads GLTPPTTPPHKANQDNPFKASPKLKPSCKTVVPPPTKRARYSECSGT. The interval 349-797 is mediates interaction with RNF34; sequence EQSELYAQLS…LKEAQRSLRR (449 aa). Phosphoserine; by AMPK is present on S538. Disordered regions lie at residues 543–598, 612–634, and 648–668; these read NSPC…SSRS, HRNS…PRYD, and EYRK…ERQK. Positions 562 to 577 are enriched in basic residues; that stretch reads QRMRSRSRSFSRHRSC. Residues 578 to 598 are compositionally biased toward low complexity; it reads SRSPYSRSRSRSPGSRSSSRS. Residues 621 to 630 are compositionally biased toward basic residues; that stretch reads SRSRSPYSRR. The 77-residue stretch at 676-752 folds into the RRM domain; the sequence is RVIYVGKIRP…TDFELYFCGR (77 aa). 2 positions are modified to N6-acetyllysine: K757 and K778.

As to quaternary structure, homooligomer. Interacts with MYBBP1A; inhibits MYBBP1A transcriptional activation. Interacts with PRDM16, LPIN1 and PML. Interacts (via LXXLL motif) with RORA and RORC (via AF-2 motif); activates RORA and RORC transcriptional activation. Interacts with LRPPRC. Interacts with FOXO1. Interacts with NR5A2. In terms of processing, phosphorylation by AMPK in skeletal muscle increases activation of its own promoter. Phosphorylated by CLK2. Heavily acetylated by KAT2A/GCN5 under conditions of high nutrients, leading to inactivation of PPARGC1A. Deacetylated by SIRT1 in low nutrients/high NAD conditions, leading to its activation. Post-translationally, ubiquitinated. Ubiquitination by RNF34 induces proteasomal degradation. White quadriceps and red tibialis anterior (TA) muscles, liver, kidney and brown adipose tissue (at protein level). Skeletal muscle, brown adipose tissue, heart, kidney and brain.

Its subcellular location is the nucleus. The protein localises to the PML body. In terms of biological role, transcriptional coactivator for steroid receptors and nuclear receptors. Greatly increases the transcriptional activity of PPARG and thyroid hormone receptor on the uncoupling protein promoter. Can regulate key mitochondrial genes that contribute to the program of adaptive thermogenesis. Plays an essential role in metabolic reprogramming in response to dietary availability through coordination of the expression of a wide array of genes involved in glucose and fatty acid metabolism. Acts as a key regulator of gluconeogenesis: stimulates hepatic gluconeogenesis by increasing the expression of gluconeogenic enzymes, and acting together with FOXO1 to promote the fasting gluconeogenic program. Induces the expression of PERM1 in the skeletal muscle in an ESRRA-dependent manner. Also involved in the integration of the circadian rhythms and energy metabolism. Required for oscillatory expression of clock genes, such as BMAL1 and NR1D1, through the coactivation of RORA and RORC, and metabolic genes, such as PDK4 and PEPCK. This Mus musculus (Mouse) protein is Peroxisome proliferator-activated receptor gamma coactivator 1-alpha (Ppargc1a).